Consider the following 176-residue polypeptide: Ribosome maturation factor RimM (176 aa).

The PRC barrel domain occupies 99-176 (EDEYYWSDLV…RMVVDWERDF (78 aa)).

This sequence belongs to the RimM family. Binds ribosomal protein uS19.

The protein localises to the cytoplasm. In terms of biological role, an accessory protein needed during the final step in the assembly of 30S ribosomal subunit, possibly for assembly of the head region. Essential for efficient processing of 16S rRNA. May be needed both before and after RbfA during the maturation of 16S rRNA. It has affinity for free ribosomal 30S subunits but not for 70S ribosomes. This Psychrobacter sp. (strain PRwf-1) protein is Ribosome maturation factor RimM.